We begin with the raw amino-acid sequence, 551 residues long: Steroid transmembrane transporter SLC22A24 (551 aa).

12 consecutive transmembrane segments (helical) span residues 16-36 (FQIL…PHTV), 146-166 (SVAK…GGHL), 174-194 (FIVT…AFAP), 204-222 (FLTG…LLIL), 235-255 (ALIF…AFGI), 260-280 (HLQL…RWLS), 350-370 (ICLL…LLIN), 378-398 (VFLL…LGNF), 410-430 (IIFM…TQEM), 435-455 (LVLA…TAVL), 469-489 (LGVI…LMIL), and 496-516 (LPWI…LLLP). Residues 524–551 (PDSIQDVENKRKSSREVKKDAVAKVTPF) form a disordered region. The span at 530–545 (VENKRKSSREVKKDAV) shows a compositional bias: basic and acidic residues.

Localized to the kidney. Mainly expressed in the late segments of proximal tubules.

The protein localises to the cell membrane. The catalysed reaction is estrone 3-sulfate(out) + glutarate(in) = estrone 3-sulfate(in) + glutarate(out). It carries out the reaction 17beta-estradiol 17-O-(beta-D-glucuronate)(out) + glutarate(in) = 17beta-estradiol 17-O-(beta-D-glucuronate)(in) + glutarate(out). It catalyses the reaction dehydroepiandrosterone 3-sulfate(out) + glutarate(in) = dehydroepiandrosterone 3-sulfate(in) + glutarate(out). Its function is as follows. Renal transmembrane organic anion/dicarboxylate exchanger that participates in the reabsorption of conjugated steroids, as well as bile acids, driven by an outward gradient of dicarboxylates such as glutarate or succinate. Transports estrone 3-sulfate and estradiol-17-glucuronide (17beta-estradiol 17-O-(beta-D-glucuronate)), but not androstanediol glucuronide (5alpha-androstane-3alpha,17beta-diol 3-O-(beta-D-glucuronate)), nor taurocholate. Prefers sulfate conjugates of steroids rather than glucuronide conjugates. The protein is Steroid transmembrane transporter SLC22A24 of Rattus norvegicus (Rat).